We begin with the raw amino-acid sequence, 269 residues long: MAQLPPRAPSAAAAAGQEWSAMAAAGEFLGFAAARRGAHRRSASDSAAFLMEAAVPMDDVIVGVGGGGEFDRLDDEQLMSMFSDVEAPAVSDGGGERGPAGEAHLMDMGDGDDGMGATSPAGAGAMAAAAAAAAADGIADPKRVKRILANRQSAQRSRVRKLQYISELERSVTTLQMEVSALSPRVAFLDHQRSLLTVGNSHLKQRIAALAQDKIFKDAHQEALKKEIERLRQVYHQQQIKATGGADIATAASMQAKHELLACEGAAMR.

The 57-residue stretch at 140–196 folds into the bZIP domain; sequence DPKRVKRILANRQSAQRSRVRKLQYISELERSVTTLQMEVSALSPRVAFLDHQRSLL. Positions 142–161 are basic motif; sequence KRVKRILANRQSAQRSRVRK. Residues 168–196 are leucine-zipper; it reads LERSVTTLQMEVSALSPRVAFLDHQRSLL.

In terms of tissue distribution, expressed in roots and shoots.

The protein localises to the nucleus. Its function is as follows. Transcription regulator. The sequence is that of Basic leucine zipper 19 (BZIP19) from Oryza sativa subsp. japonica (Rice).